We begin with the raw amino-acid sequence, 1199 residues long: DNA-directed RNA polymerase subunit beta (1199 aa).

Positions 1175–1199 (EEKKAHEAAAQATDGKSANSTDDKK) are disordered. Residues 1188 to 1199 (DGKSANSTDDKK) are compositionally biased toward polar residues.

The protein belongs to the RNA polymerase beta chain family. As to quaternary structure, the RNAP catalytic core consists of 2 alpha, 1 beta, 1 beta' and 1 omega subunit. When a sigma factor is associated with the core the holoenzyme is formed, which can initiate transcription.

The catalysed reaction is RNA(n) + a ribonucleoside 5'-triphosphate = RNA(n+1) + diphosphate. In terms of biological role, DNA-dependent RNA polymerase catalyzes the transcription of DNA into RNA using the four ribonucleoside triphosphates as substrates. The chain is DNA-directed RNA polymerase subunit beta from Lacticaseibacillus paracasei (strain ATCC 334 / BCRC 17002 / CCUG 31169 / CIP 107868 / KCTC 3260 / NRRL B-441) (Lactobacillus paracasei).